Here is a 1372-residue protein sequence, read N- to C-terminus: DNA-directed RNA polymerase subunit beta'' (1372 aa).

Zn(2+) is bound by residues cysteine 252, cysteine 321, cysteine 328, and cysteine 331.

The protein belongs to the RNA polymerase beta' chain family. RpoC2 subfamily. In terms of assembly, in plastids the minimal PEP RNA polymerase catalytic core is composed of four subunits: alpha, beta, beta', and beta''. When a (nuclear-encoded) sigma factor is associated with the core the holoenzyme is formed, which can initiate transcription. Zn(2+) serves as cofactor.

The protein localises to the plastid. It is found in the organellar chromatophore. The catalysed reaction is RNA(n) + a ribonucleoside 5'-triphosphate = RNA(n+1) + diphosphate. Functionally, DNA-dependent RNA polymerase catalyzes the transcription of DNA into RNA using the four ribonucleoside triphosphates as substrates. The polypeptide is DNA-directed RNA polymerase subunit beta'' (Paulinella chromatophora).